A 647-amino-acid chain; its full sequence is DNA mismatch repair protein MutL (647 aa).

It belongs to the DNA mismatch repair MutL/HexB family.

Its function is as follows. This protein is involved in the repair of mismatches in DNA. It is required for dam-dependent methyl-directed DNA mismatch repair. May act as a 'molecular matchmaker', a protein that promotes the formation of a stable complex between two or more DNA-binding proteins in an ATP-dependent manner without itself being part of a final effector complex. The protein is DNA mismatch repair protein MutL of Bacillus cereus (strain 03BB102).